Reading from the N-terminus, the 269-residue chain is Probable ribosomal RNA small subunit methyltransferase A (269 aa).

Residues His-23, Leu-25, Gly-50, Glu-71, Asp-95, and Asn-110 each contribute to the S-adenosyl-L-methionine site.

The protein belongs to the class I-like SAM-binding methyltransferase superfamily. rRNA adenine N(6)-methyltransferase family. RsmA subfamily.

The protein resides in the cytoplasm. Functionally, specifically dimethylates two adjacent adenosines in the loop of a conserved hairpin near the 3'-end of 16S rRNA in the 30S particle. May play a critical role in biogenesis of 30S subunits. This Pyrococcus abyssi (strain GE5 / Orsay) protein is Probable ribosomal RNA small subunit methyltransferase A.